The primary structure comprises 142 residues: Large ribosomal subunit protein uL11 (142 aa).

The protein belongs to the universal ribosomal protein uL11 family. As to quaternary structure, part of the ribosomal stalk of the 50S ribosomal subunit. Interacts with L10 and the large rRNA to form the base of the stalk. L10 forms an elongated spine to which L12 dimers bind in a sequential fashion forming a multimeric L10(L12)X complex. One or more lysine residues are methylated.

In terms of biological role, forms part of the ribosomal stalk which helps the ribosome interact with GTP-bound translation factors. This Enterobacter sp. (strain 638) protein is Large ribosomal subunit protein uL11.